The primary structure comprises 338 residues: Large ribosomal subunit protein uL10 (338 aa).

The disordered stretch occupies residues 303-338; the sequence is VEVSAAPAAEEEKEEEKKEEEKKEEDTGAAGLALLF. The span at 317 to 328 shows a compositional bias: basic and acidic residues; the sequence is EEKKEEEKKEED.

It belongs to the universal ribosomal protein uL10 family. As to quaternary structure, part of the 50S ribosomal subunit. Forms part of the ribosomal stalk which helps the ribosome interact with GTP-bound translation factors. Forms a heptameric L10(L12)2(L12)2(L12)2 complex, where L10 forms an elongated spine to which the L12 dimers bind in a sequential fashion.

Functionally, forms part of the ribosomal stalk, playing a central role in the interaction of the ribosome with GTP-bound translation factors. The polypeptide is Large ribosomal subunit protein uL10 (Methanocaldococcus jannaschii (strain ATCC 43067 / DSM 2661 / JAL-1 / JCM 10045 / NBRC 100440) (Methanococcus jannaschii)).